Consider the following 337-residue polypeptide: L-Ala-D/L-amino acid epimerase (337 aa).

Residues Thr129 and 151–153 (KIK) contribute to the substrate site. Mg(2+) is bound by residues Asp177, Glu203, and Asp228. Residues Lys250 and 300 to 302 (DMD) each bind substrate.

Belongs to the mandelate racemase/muconate lactonizing enzyme family. Mg(2+) is required as a cofactor.

Functionally, broad specificity dipeptide epimerase. Catalyzes the epimerization of L-Ala-L-Ala, L-Ala-L-Glu, L-Ala-L-Ser, L-Ala-L-Thr and L-Ala-L-Met (in vitro). The protein is L-Ala-D/L-amino acid epimerase of Maribacter sp. (strain HTCC2170 / KCCM 42371).